Consider the following 602-residue polypeptide: Elongation factor 4 (602 aa).

The 182-residue stretch at 7-188 folds into the tr-type G domain; it reads ENIRNFSIIA…SIIRLVPPPK (182 aa). GTP contacts are provided by residues 19 to 24 and 135 to 138; these read DHGKST and NKID.

It belongs to the TRAFAC class translation factor GTPase superfamily. Classic translation factor GTPase family. LepA subfamily.

The protein resides in the cell inner membrane. The enzyme catalyses GTP + H2O = GDP + phosphate + H(+). Its function is as follows. Required for accurate and efficient protein synthesis under certain stress conditions. May act as a fidelity factor of the translation reaction, by catalyzing a one-codon backward translocation of tRNAs on improperly translocated ribosomes. Back-translocation proceeds from a post-translocation (POST) complex to a pre-translocation (PRE) complex, thus giving elongation factor G a second chance to translocate the tRNAs correctly. Binds to ribosomes in a GTP-dependent manner. In Chlamydia trachomatis serovar D (strain ATCC VR-885 / DSM 19411 / UW-3/Cx), this protein is Elongation factor 4.